Here is a 762-residue protein sequence, read N- to C-terminus: Centrosomal protein of 85 kDa (762 aa).

Disordered regions lie at residues 1–26 (MAMQ…IQKG) and 94–119 (VMPS…SKLP). Composition is skewed to polar residues over residues 14-26 (HVTS…IQKG) and 98-111 (TLGT…STPV). The residue at position 17 (Ser17) is a Phosphoserine. Ser126 and Ser141 each carry phosphoserine. The tract at residues 257 to 433 (GLSKPLPSQV…QLIRESLKVA (177 aa)) is mediates interaction with NEK2 and is required for its function in the suppression of centrosome disjunction. Coiled coils occupy residues 334 to 657 (EHLL…RQAQ) and 723 to 750 (PDVI…MSDR). The interval 434–476 (LQKHSEEVKKQEERVKGRDKHINNLKKKCQKESEQNREKQQRI) is required for centrosome localization and for its function in the suppression of centrosome disjunction. Composition is skewed to basic and acidic residues over residues 443-455 (KQEE…DKHI) and 463-474 (QKESEQNREKQQ). Disordered stretches follow at residues 443–474 (KQEE…EKQQ) and 541–570 (EAEF…VEME). Ser623 bears the Phosphoserine mark.

The protein belongs to the CEP85 family. As to quaternary structure, homodimer. Interacts with STIL (via N-terminus); this interaction is essential for robust PLK4 activation and efficient centriole assembly and for PLK4-dependent cell migration. Interacts with PLK4; required for CEP85 to be able to drive centriole duplication and cell migration.

The protein localises to the cytoplasm. It is found in the cytoskeleton. Its subcellular location is the microtubule organizing center. The protein resides in the centrosome. It localises to the spindle pole. The protein localises to the nucleus. It is found in the nucleolus. Its subcellular location is the centriole. The protein resides in the cell cortex. In terms of biological role, acts as a regulator of centriole duplication through a direct interaction with STIL, a key factor involved in the early steps of centriole formation. The CEP85-STIL protein complex acts as a modulator of PLK4-driven cytoskeletal rearrangements and directional cell motility. Acts as a negative regulator of NEK2 to maintain the centrosome integrity in interphase. Suppresses centrosome disjunction by inhibiting NEK2 kinase activity. This Homo sapiens (Human) protein is Centrosomal protein of 85 kDa.